The sequence spans 309 residues: Maintenance of mitochondrial morphology protein 1 (309 aa).

At 1–16 (MGNAYIFSLQPTFTQG) the chain is on the lumenal side. Residues 17 to 37 (LILGQFSILFLLVLVLKYLFF) traverse the membrane as a helical segment. At 38-309 (DTVSDHAYRT…EQQAGELPVN (272 aa)) the chain is on the cytoplasmic side. The region spanning 84-293 (ECESADWLNA…LPGLASVSEV (210 aa)) is the SMP-LTD domain.

It belongs to the MMM1 family. As to quaternary structure, homodimer. Component of the ER-mitochondria encounter structure (ERMES) or MDM complex, composed of MMM1, MDM10, MDM12 and MDM34. An MMM1 homodimer associates with one molecule of MDM12 on each side in a pairwise head-to-tail manner, and the SMP-LTD domains of MMM1 and MDM12 generate a continuous hydrophobic tunnel for phospholipid trafficking.

It localises to the endoplasmic reticulum membrane. Component of the ERMES/MDM complex, which serves as a molecular tether to connect the endoplasmic reticulum (ER) and mitochondria. Components of this complex are involved in the control of mitochondrial shape and protein biogenesis, and function in nonvesicular lipid trafficking between the ER and mitochondria. The MDM12-MMM1 subcomplex functions in the major beta-barrel assembly pathway that is responsible for biogenesis of all outer membrane beta-barrel proteins, and acts in a late step after the SAM complex. The MDM10-MDM12-MMM1 subcomplex further acts in the TOM40-specific pathway after the action of the MDM12-MMM1 complex. Essential for establishing and maintaining the structure of mitochondria and maintenance of mtDNA nucleoids. This Postia placenta (strain ATCC 44394 / Madison 698-R) (Brown rot fungus) protein is Maintenance of mitochondrial morphology protein 1.